The sequence spans 73 residues: Venom peptide La1 (73 aa).

Position 73 is a lysine amide (K73).

It belongs to the scorpion La1-like peptide family. Post-translationally, contains 4 disulfide bonds. As to expression, expressed by the venom gland.

The protein localises to the secreted. Not toxic to insect. In Liocheles australasiae (Dwarf wood scorpion), this protein is Venom peptide La1.